A 182-amino-acid chain; its full sequence is MTFDQSNFKSLIRPVVDFPKPGVVFRDITPLFQSPKATRQVIDSFVQRYIDADFSHIGVMDARGFLIGSVVAYQLNKPLVLFRKQGKLPADVLSEAYQTEYGEAYLEVHADSLCEGNSVIMFDDLIATGGTLIAAANLIRRMGAQVHEAAAIIDLPELGGSKRLNDLNIPTFCLTEFALDEQ.

Belongs to the purine/pyrimidine phosphoribosyltransferase family. As to quaternary structure, homodimer.

The protein resides in the cytoplasm. The catalysed reaction is AMP + diphosphate = 5-phospho-alpha-D-ribose 1-diphosphate + adenine. Its pathway is purine metabolism; AMP biosynthesis via salvage pathway; AMP from adenine: step 1/1. Functionally, catalyzes a salvage reaction resulting in the formation of AMP, that is energically less costly than de novo synthesis. The protein is Adenine phosphoribosyltransferase of Pseudomonas syringae pv. tomato (strain ATCC BAA-871 / DC3000).